A 75-amino-acid polypeptide reads, in one-letter code: Small ribosomal subunit protein bS18 (75 aa).

This sequence belongs to the bacterial ribosomal protein bS18 family. Part of the 30S ribosomal subunit. Forms a tight heterodimer with protein bS6.

Binds as a heterodimer with protein bS6 to the central domain of the 16S rRNA, where it helps stabilize the platform of the 30S subunit. This Alteromonas mediterranea (strain DSM 17117 / CIP 110805 / LMG 28347 / Deep ecotype) protein is Small ribosomal subunit protein bS18.